A 289-amino-acid polypeptide reads, in one-letter code: 4-hydroxybenzoate octaprenyltransferase (289 aa).

A run of 9 helical transmembrane segments spans residues Ile19–Leu39, Ile42–Ile62, Gly85–Ile105, Val107–Leu127, Phe134–Phe154, Ala165–Leu185, Ile211–Phe231, Ser233–Tyr253, and Phe265–Ile285.

Belongs to the UbiA prenyltransferase family. Requires Mg(2+) as cofactor.

It is found in the cell inner membrane. The enzyme catalyses all-trans-octaprenyl diphosphate + 4-hydroxybenzoate = 4-hydroxy-3-(all-trans-octaprenyl)benzoate + diphosphate. Its pathway is cofactor biosynthesis; ubiquinone biosynthesis. Its function is as follows. Catalyzes the prenylation of para-hydroxybenzoate (PHB) with an all-trans polyprenyl group. Mediates the second step in the final reaction sequence of ubiquinone-8 (UQ-8) biosynthesis, which is the condensation of the polyisoprenoid side chain with PHB, generating the first membrane-bound Q intermediate 3-octaprenyl-4-hydroxybenzoate. The polypeptide is 4-hydroxybenzoate octaprenyltransferase (Francisella tularensis subsp. holarctica (strain FTNF002-00 / FTA)).